A 130-amino-acid polypeptide reads, in one-letter code: Small ribosomal subunit protein uS8 (130 aa).

Lys88 carries the N6-succinyllysine modification.

The protein belongs to the universal ribosomal protein uS8 family. Component of the small ribosomal subunit. Part of the small subunit (SSU) processome, composed of more than 70 proteins and the RNA chaperone small nucleolar RNA (snoRNA) U3.

The protein localises to the cytoplasm. It is found in the nucleus. It localises to the nucleolus. Functionally, component of the small ribosomal subunit. The ribosome is a large ribonucleoprotein complex responsible for the synthesis of proteins in the cell. Part of the small subunit (SSU) processome, first precursor of the small eukaryotic ribosomal subunit. During the assembly of the SSU processome in the nucleolus, many ribosome biogenesis factors, an RNA chaperone and ribosomal proteins associate with the nascent pre-rRNA and work in concert to generate RNA folding, modifications, rearrangements and cleavage as well as targeted degradation of pre-ribosomal RNA by the RNA exosome. Required for proper erythropoiesis. This chain is Small ribosomal subunit protein uS8 (Rps15a), found in Mus musculus (Mouse).